The chain runs to 474 residues: L-arabinose isomerase 2 (474 aa).

Glu306, Glu331, His348, and His447 together coordinate Mn(2+).

The protein belongs to the arabinose isomerase family. The cofactor is Mn(2+).

It carries out the reaction beta-L-arabinopyranose = L-ribulose. The protein operates within carbohydrate degradation; L-arabinose degradation via L-ribulose; D-xylulose 5-phosphate from L-arabinose (bacterial route): step 1/3. Functionally, catalyzes the conversion of L-arabinose to L-ribulose. The polypeptide is L-arabinose isomerase 2 (Bacillus licheniformis (strain ATCC 14580 / DSM 13 / JCM 2505 / CCUG 7422 / NBRC 12200 / NCIMB 9375 / NCTC 10341 / NRRL NRS-1264 / Gibson 46)).